Here is a 394-residue protein sequence, read N- to C-terminus: Probable purine permease 8 (394 aa).

A run of 10 helical transmembrane segments spans residues 45-65 (WLRI…STIL), 77-97 (TWMG…FRFF), 113-133 (FSSF…VSAN), 139-159 (VGLL…QLAF), 172-192 (FTPF…LLVV), 208-228 (VIGI…LSLV), 247-267 (LVAY…FASG), 289-309 (TLAS…GLIF), 315-335 (FSNS…VIVF), and 344-364 (IFSI…HYLD). The interval 373-394 (TSPVGDPHLLPAEEGHTNIHSV) is disordered. A compositionally biased stretch (basic and acidic residues) spans 383 to 394 (PAEEGHTNIHSV).

Belongs to the purine permeases (TC 2.A.7.14) family.

The protein resides in the membrane. This chain is Probable purine permease 8 (PUP8), found in Arabidopsis thaliana (Mouse-ear cress).